The following is a 134-amino-acid chain: Large ribosomal subunit protein bL12 (134 aa).

It belongs to the bacterial ribosomal protein bL12 family. Homodimer. Part of the ribosomal stalk of the 50S ribosomal subunit. Forms a multimeric L10(L12)X complex, where L10 forms an elongated spine to which 2 to 4 L12 dimers bind in a sequential fashion. Binds GTP-bound translation factors.

Forms part of the ribosomal stalk which helps the ribosome interact with GTP-bound translation factors. Is thus essential for accurate translation. In Chlamydia abortus (strain DSM 27085 / S26/3) (Chlamydophila abortus), this protein is Large ribosomal subunit protein bL12.